The following is a 218-amino-acid chain: NAD(P)H-hydrate epimerase (218 aa).

Residues 9–215 (MKKIDQYAID…DIGIPQKAIR (207 aa)) form the YjeF N-terminal domain. 55-59 (NNGAD) lines the (6S)-NADPHX pocket. Residues Asn-56 and Asp-127 each contribute to the K(+) site. Residues 131–137 (GTGLNRT) and Asp-160 each bind (6S)-NADPHX. Ser-163 serves as a coordination point for K(+).

It belongs to the NnrE/AIBP family. The cofactor is K(+).

It carries out the reaction (6R)-NADHX = (6S)-NADHX. The enzyme catalyses (6R)-NADPHX = (6S)-NADPHX. Its function is as follows. Catalyzes the epimerization of the S- and R-forms of NAD(P)HX, a damaged form of NAD(P)H that is a result of enzymatic or heat-dependent hydration. This is a prerequisite for the S-specific NAD(P)H-hydrate dehydratase to allow the repair of both epimers of NAD(P)HX. This Anaerococcus prevotii (strain ATCC 9321 / DSM 20548 / JCM 6508 / NCTC 11806 / PC1) (Peptostreptococcus prevotii) protein is NAD(P)H-hydrate epimerase.